The following is a 506-amino-acid chain: ATP synthase subunit alpha (506 aa).

170 to 177 (GDRQTGKT) is an ATP binding site.

It belongs to the ATPase alpha/beta chains family. As to quaternary structure, F-type ATPases have 2 components, CF(1) - the catalytic core - and CF(0) - the membrane proton channel. CF(1) has five subunits: alpha(3), beta(3), gamma(1), delta(1), epsilon(1). CF(0) has four main subunits: a(1), b(1), b'(1) and c(9-12).

The protein localises to the cellular thylakoid membrane. It catalyses the reaction ATP + H2O + 4 H(+)(in) = ADP + phosphate + 5 H(+)(out). Its function is as follows. Produces ATP from ADP in the presence of a proton gradient across the membrane. The alpha chain is a regulatory subunit. This chain is ATP synthase subunit alpha, found in Synechococcus sp. (strain JA-3-3Ab) (Cyanobacteria bacterium Yellowstone A-Prime).